Reading from the N-terminus, the 407-residue chain is Histone acetyltransferase mst2 (407 aa).

An MYST-type HAT domain is found at 98-372 (PQPTSIRYLY…VNPKLLRWTP (275 aa)). The C2HC MYST-type zinc finger occupies 131–156 (LYICESCLKYMNSDHVLQRHKMKCSW). Residue Lys198 is modified to N6-acetyllysine; by autocatalysis. Residues 241-243 (ILT), Thr243, and 248-254 (QRRGYGV) contribute to the acetyl-CoA site. Glu274 functions as the Proton donor/acceptor in the catalytic mechanism. Acetyl-CoA-binding residues include Ser278 and Ser287.

It belongs to the MYST (SAS/MOZ) family. As to quaternary structure, component of the mst2 complex composed of at least eaf6, mst2, nto1, pdp3, ptf1, ptf2 and tfg3. In terms of processing, autoacetylation at Lys-198 is required for proper function.

Its subcellular location is the cytoplasm. The protein resides in the nucleus. The enzyme catalyses L-lysyl-[protein] + acetyl-CoA = N(6)-acetyl-L-lysyl-[protein] + CoA + H(+). In terms of biological role, component of the mst2 complex which is a highly specific H3 lysine 14 (H3K14) acetyltransferase that functions together with gcn5 to regulate global levels of H3K14 acetylation (H3K14ac), critical for DNA damage checkpoint activation. Negatively regulates telomere silencing. Telomere silencing is increased due to histone hypoacetylation and/or an increase in the ratio of methylated histones to acetylated histones. Telomeric histone acetylation contributes to normal meiotic progression. The protein is Histone acetyltransferase mst2 (mst2) of Schizosaccharomyces pombe (strain 972 / ATCC 24843) (Fission yeast).